The primary structure comprises 313 residues: MAEPIELLCWGGDWDLPSVQTDSLTVLAYAKFAGAELTVKFVDWTWRTITASVPQIHYEGTTVTEPTQILNFLRKQRFNADFELTAKQGADTMAYIALLEEKLRPALLHTFWVDAENYANLTRPWFTSHSPFPLNFFVPGRQASLALSRILLTKAESPLLNITEVEGKIYSEAKECLNLLSHRLGNFNFFFGDTPTSLDAFVFGHIAPLIKAPLPSGQLQKHLNQLDNLCQFCNTILKNYFTDATAEKRMDCSPTVAHDPVDANLQKLTQLVNKESNLIEKMDDNLRSSPQHRPHRHEAKPSAPASDRNSTPA.

The tract at residues 280–313 is disordered; sequence EKMDDNLRSSPQHRPHRHEAKPSAPASDRNSTPA.

Belongs to the metaxin family. In terms of assembly, part of a large protein complex spanning both mitochondrial membranes termed the mitochondrial intermembrane space bridging (MIB) complex.

Its subcellular location is the mitochondrion. The protein resides in the mitochondrion outer membrane. Could function in transport of proteins into the mitochondrion. This chain is Metaxin-3 (mtx3), found in Danio rerio (Zebrafish).